The following is a 478-amino-acid chain: Adenosylhomocysteinase (478 aa).

T57, D139, and E201 together coordinate substrate. 202–204 contributes to the NAD(+) binding site; that stretch reads TTT. K231 and D235 together coordinate substrate. NAD(+) contacts are provided by residues N236, 265-270, E288, N323, 344-346, and N392; these read GYGDVG and IGH.

This sequence belongs to the adenosylhomocysteinase family. NAD(+) serves as cofactor.

The protein resides in the cytoplasm. It carries out the reaction S-adenosyl-L-homocysteine + H2O = L-homocysteine + adenosine. It functions in the pathway amino-acid biosynthesis; L-homocysteine biosynthesis; L-homocysteine from S-adenosyl-L-homocysteine: step 1/1. Functionally, may play a key role in the regulation of the intracellular concentration of adenosylhomocysteine. This Corynebacterium efficiens (strain DSM 44549 / YS-314 / AJ 12310 / JCM 11189 / NBRC 100395) protein is Adenosylhomocysteinase.